The chain runs to 145 residues: 3-dehydroquinate dehydratase (145 aa).

The Proton acceptor role is filled by Tyr-24. Asn-76, His-82, and Asp-89 together coordinate substrate. The active-site Proton donor is the His-102. Substrate contacts are provided by residues 103–104 and Arg-113; that span reads VS.

This sequence belongs to the type-II 3-dehydroquinase family. Homododecamer.

It catalyses the reaction 3-dehydroquinate = 3-dehydroshikimate + H2O. It functions in the pathway metabolic intermediate biosynthesis; chorismate biosynthesis; chorismate from D-erythrose 4-phosphate and phosphoenolpyruvate: step 3/7. In terms of biological role, catalyzes a trans-dehydration via an enolate intermediate. This chain is 3-dehydroquinate dehydratase, found in Janthinobacterium sp. (strain Marseille) (Minibacterium massiliensis).